The primary structure comprises 948 residues: MKYLASFRTTLKVSRYLFRALALLIWLLIAFVSVFYIVNALHQRESEIRQEFNLSSDQAQRFIQRTSDVMKELKYIAENRLTAENGVMSSRARDDKMVVPDFEPLFADSDCAAMGSAWRGSLESLAWFMRYWRDNFSAAYDLNRVFLIGSDNLCMANFGLREMPVERDDALKALHERIMKYRNAPQEESGNNLFWISQGARQGVGYFYALTPVYLANRLQALLGVEQSIRMENFFTPGSLPMGVTIIDENGHSLISLTGPDGIIKAEPRWMQERSWFGYTPGFRELVLKKSLPPSSLSIVYSVPVDLVLERIRILILNAILLNVLVGAGLFTLARMYERRIFIPAESDAQRLEEHEQFNRKIVASAPVGICILRTIDGVNILSNELAHTYLNMLTHEDRQRLTQIICGQQVNFVDVLTSNNTNLQISFVHSRYRNENVAICVLVDVSTRVKMEESLQEMAQAAEQASQSKSMFLATVSHELRTPLYGIIGNLDLLQTKELPKGVDRLVTAMNNSSSLLLKIISDILDFSKIESEQLKIEPREFSPREVMNHITANYLPLVVRKQLGLYCFIEPDVPVSLNGDPMRLQQVISNLLSNAIKFTDIGCIVLHVRCDGDYLSIRVRDTGVGIPAKEVVRLFDPFFQVGTGVQRNFQGTGLGLAICEKLISMMDGDISVDSEPGMGSQFTLRIPLYGAQYPVKKSVEGLAGTCCWLAVRNTSLCQFIETSLARSGVHTQRYEGQEPAADDILIVDDALEHTWQGRAAVVFCRRHIGIPLERAPGEWVHSVASVHELPALLARIYSIELDSEALSSALPTTDKTADSNDDMMILVVDDHPINRRLLADQLGSLGYQCKTANDGVDALNVLSKNAIDIVLSDVNMPNMDGYRLTQRIRQLGLTLPVVGVTANALAEEKQRCLESGMDSCLSKPVTLDALKQTLAVYAERVRKTRA.

Over 1–20 (MKYLASFRTTLKVSRYLFRA) the chain is Cytoplasmic. A helical membrane pass occupies residues 21 to 41 (LALLIWLLIAFVSVFYIVNAL). Over 42–313 (HQRESEIRQE…PVDLVLERIR (272 aa)) the chain is Periplasmic. Residues 314–334 (ILILNAILLNVLVGAGLFTLA) traverse the membrane as a helical segment. Topologically, residues 335-948 (RMYERRIFIP…YAERVRKTRA (614 aa)) are cytoplasmic. The 69-residue stretch at 357–425 (QFNRKIVASA…VLTSNNTNLQ (69 aa)) folds into the PAS domain. The Histidine kinase domain occupies 476–692 (TVSHELRTPL…QFTLRIPLYG (217 aa)). His-479 is subject to Phosphohistidine; by autocatalysis. The region spanning 705-805 (AGTCCWLAVR…ARIYSIELDS (101 aa)) is the ABL domain. Positions 826–940 (MILVVDDHPI…ALKQTLAVYA (115 aa)) constitute a Response regulatory domain. A 4-aspartylphosphate modification is found at Asp-875.

Belongs to the RcsC family. As to quaternary structure, interacts with RcsD. In terms of processing, autophosphorylated. Activation probably requires a transfer of a phosphate group from a His in the transmitter domain to an Asp in the receiver domain.

It is found in the cell inner membrane. The enzyme catalyses ATP + protein L-histidine = ADP + protein N-phospho-L-histidine.. In terms of biological role, component of the Rcs signaling system, which controls transcription of numerous genes. RcsC functions as a membrane-associated protein kinase that phosphorylates RcsD in response to environmental signals. The phosphoryl group is then transferred to the response regulator RcsB. The polypeptide is Sensor histidine kinase RcsC (Salmonella typhi).